The sequence spans 640 residues: Threonine--tRNA ligase (640 aa).

The TGS domain occupies 1–61; sequence MPTITLPDGS…ACDADVTIIT (61 aa). Positions 243–534 are catalytic; that stretch reads DHRKIGKALD…LIEQYAGNMP (292 aa). The Zn(2+) site is built by Cys334, His385, and His511.

The protein belongs to the class-II aminoacyl-tRNA synthetase family. As to quaternary structure, homodimer. Zn(2+) is required as a cofactor.

The protein resides in the cytoplasm. It catalyses the reaction tRNA(Thr) + L-threonine + ATP = L-threonyl-tRNA(Thr) + AMP + diphosphate + H(+). In terms of biological role, catalyzes the attachment of threonine to tRNA(Thr) in a two-step reaction: L-threonine is first activated by ATP to form Thr-AMP and then transferred to the acceptor end of tRNA(Thr). Also edits incorrectly charged L-seryl-tRNA(Thr). The polypeptide is Threonine--tRNA ligase (Dichelobacter nodosus (strain VCS1703A)).